A 324-amino-acid polypeptide reads, in one-letter code: N-acetylmuramoyl-L-alanine amidase sle1 (324 aa).

The signal sequence occupies residues 1–25 (MQKKYITAIIGTTALSALASTHAQA). LysM domains lie at 27 to 70 (TTHT…VLKV), 84 to 127 (TVYT…KLKV), and 147 to 190 (ATYT…KLKV). Residues 200–324 (SNNTRSNGGY…YQVRNYKFIH (125 aa)) form the Peptidase C51 domain.

The protein resides in the secreted. Its subcellular location is the cell surface. It carries out the reaction Hydrolyzes the link between N-acetylmuramoyl residues and L-amino acid residues in certain cell-wall glycopeptides.. Its function is as follows. Peptidoglycan hydrolase involved in the splitting of the septum during cell division. This Staphylococcus epidermidis (strain ATCC 12228 / FDA PCI 1200) protein is N-acetylmuramoyl-L-alanine amidase sle1 (sle1).